Consider the following 242-residue polypeptide: 1-(5-phosphoribosyl)-5-[(5-phosphoribosylamino)methylideneamino] imidazole-4-carboxamide isomerase (242 aa).

The Proton acceptor role is filled by Asp-10. The Proton donor role is filled by Asp-131.

It belongs to the HisA/HisF family.

It localises to the cytoplasm. It catalyses the reaction 1-(5-phospho-beta-D-ribosyl)-5-[(5-phospho-beta-D-ribosylamino)methylideneamino]imidazole-4-carboxamide = 5-[(5-phospho-1-deoxy-D-ribulos-1-ylimino)methylamino]-1-(5-phospho-beta-D-ribosyl)imidazole-4-carboxamide. Its pathway is amino-acid biosynthesis; L-histidine biosynthesis; L-histidine from 5-phospho-alpha-D-ribose 1-diphosphate: step 4/9. In Bifidobacterium animalis subsp. lactis (strain AD011), this protein is 1-(5-phosphoribosyl)-5-[(5-phosphoribosylamino)methylideneamino] imidazole-4-carboxamide isomerase.